We begin with the raw amino-acid sequence, 89 residues long: Small ribosomal subunit protein uS15 (89 aa).

Belongs to the universal ribosomal protein uS15 family. Part of the 30S ribosomal subunit. Forms a bridge to the 50S subunit in the 70S ribosome, contacting the 23S rRNA.

Functionally, one of the primary rRNA binding proteins, it binds directly to 16S rRNA where it helps nucleate assembly of the platform of the 30S subunit by binding and bridging several RNA helices of the 16S rRNA. In terms of biological role, forms an intersubunit bridge (bridge B4) with the 23S rRNA of the 50S subunit in the ribosome. This Cupriavidus metallidurans (strain ATCC 43123 / DSM 2839 / NBRC 102507 / CH34) (Ralstonia metallidurans) protein is Small ribosomal subunit protein uS15.